Consider the following 1050-residue polypeptide: Self-sufficient cytochrome P450 monooxygenase CYP505E5 (1050 aa).

Residue Cys-405 coordinates heme. Residues 467-491 (RRSMLVARDGSSGESSNHLAEARGD) form a disordered region. The Flavodoxin-like domain maps to 500-641 (VSFFYGSNSG…DLEAWEETSL (142 aa)). FMN is bound by residues 506 to 510 (SNSGT) and 585 to 617 (VFGC…TRLA). In terms of domain architecture, FAD-binding FR-type spans 679-907 (KGLIEAKVTA…RPAKESFHLP (229 aa)).

This sequence in the N-terminal section; belongs to the cytochrome P450 family. FAD serves as cofactor. FMN is required as a cofactor. Requires heme as cofactor.

It catalyses the reaction 2 oxidized [cytochrome P450] + NADPH = 2 reduced [cytochrome P450] + NADP(+) + H(+). It carries out the reaction an organic molecule + reduced [NADPH--hemoprotein reductase] + O2 = an alcohol + oxidized [NADPH--hemoprotein reductase] + H2O + H(+). The enzyme catalyses dodecanoate + reduced [NADPH--hemoprotein reductase] + O2 = 5-hydroxydodecanoate + oxidized [NADPH--hemoprotein reductase] + H2O + H(+). The catalysed reaction is tetradecanoate + reduced [NADPH--hemoprotein reductase] + O2 = 7-hydroxytetradecanoate + oxidized [NADPH--hemoprotein reductase] + H2O + H(+). It catalyses the reaction dodecan-1-ol + reduced [NADPH--hemoprotein reductase] + O2 = 1,5-dodecanediol + oxidized [NADPH--hemoprotein reductase] + H2O + H(+). It carries out the reaction dodecan-1-ol + reduced [NADPH--hemoprotein reductase] + O2 = 1,4-dodecanediol + oxidized [NADPH--hemoprotein reductase] + H2O + H(+). The enzyme catalyses dodecan-1-ol + reduced [NADPH--hemoprotein reductase] + O2 = 1,6-dodecanediol + oxidized [NADPH--hemoprotein reductase] + H2O + H(+). Its function is as follows. Self-sufficient cytochrome P450 monooxygenase that catalyzes the regioselective in-chain hydroxylation of alkanes, fatty alcohols, and fatty acids at the omega-7 position. Performs hydroxylation of C10-C16 n-alkanes and C12 and C14 fatty alcohols; and thereby enables the one step biocatalytic synthesis of rare alcohols such as 5-dodecanol and 7-tetradecanol. Converts 1-dodecanol into 1,5-dodecanediol as major product with very little sub-terminally hydroxylated products with the 1,4-dodecanediol and 1,6-dodecanediol more abundant. Converts dodecanoic acid to 5-hydroxydodecanoic acid which can be further converted into delta-dodecalactone by lactonization of the 5-hydroxy acid at low pH. Also gives sub-terminal hydroxylation of dodecanoic acid with 9-hydroxydodecanoic acid being the second most abundant product. In Aspergillus niger, this protein is Self-sufficient cytochrome P450 monooxygenase CYP505E5.